The chain runs to 148 residues: Small ribosomal subunit protein uS15 (148 aa).

The segment covering M1 to S14 has biased composition (basic residues). The tract at residues M1–Q27 is disordered.

Belongs to the universal ribosomal protein uS15 family. As to quaternary structure, part of the 30S ribosomal subunit.

The chain is Small ribosomal subunit protein uS15 from Cenarchaeum symbiosum (strain A).